The sequence spans 610 residues: tRNA uridine 5-carboxymethylaminomethyl modification enzyme MnmG (610 aa).

Position 14-19 (14-19) interacts with FAD; that stretch reads GAGHAG. NAD(+) is bound at residue 274 to 288; sequence GPRYCPSIEDKIVKF.

Belongs to the MnmG family. In terms of assembly, homodimer. Heterotetramer of two MnmE and two MnmG subunits. FAD serves as cofactor.

Its subcellular location is the cytoplasm. In terms of biological role, NAD-binding protein involved in the addition of a carboxymethylaminomethyl (cmnm) group at the wobble position (U34) of certain tRNAs, forming tRNA-cmnm(5)s(2)U34. This Chlamydia muridarum (strain MoPn / Nigg) protein is tRNA uridine 5-carboxymethylaminomethyl modification enzyme MnmG.